The sequence spans 481 residues: Proline--tRNA ligase (481 aa).

It belongs to the class-II aminoacyl-tRNA synthetase family. ProS type 3 subfamily. Homodimer.

It is found in the cytoplasm. It catalyses the reaction tRNA(Pro) + L-proline + ATP = L-prolyl-tRNA(Pro) + AMP + diphosphate. Functionally, catalyzes the attachment of proline to tRNA(Pro) in a two-step reaction: proline is first activated by ATP to form Pro-AMP and then transferred to the acceptor end of tRNA(Pro). The chain is Proline--tRNA ligase from Chlorobium chlorochromatii (strain CaD3).